We begin with the raw amino-acid sequence, 74 residues long: Ubiquitin-like protein FUBI (74 aa).

The protein belongs to the ubiquitin family.

This Rattus norvegicus (Rat) protein is Ubiquitin-like protein FUBI (Fau).